Reading from the N-terminus, the 257-residue chain is Zinc transporter ZupT (257 aa).

Helical transmembrane passes span 5–25 (LILT…GVLG), 32–52 (VLAF…LMEM), 61–81 (GMSP…YFGL), 109–129 (AILL…ATFV), 137–157 (LGFG…LAVA), 171–191 (IFWA…AWLI), 195–215 (LVSP…MVAL), and 236–256 (GVLC…TIGI). Asparagine 120 and glutamate 123 together coordinate Fe(2+). Zn(2+) is bound by residues glutamate 123 and histidine 148. Residues asparagine 149, glutamate 152, and glutamate 181 each contribute to the Fe(2+) site. Glutamate 152 lines the Zn(2+) pocket.

Belongs to the ZIP transporter (TC 2.A.5) family. ZupT subfamily.

It is found in the cell inner membrane. It catalyses the reaction Zn(2+)(in) = Zn(2+)(out). Functionally, mediates zinc uptake. May also transport other divalent cations. This chain is Zinc transporter ZupT, found in Salmonella heidelberg (strain SL476).